The primary structure comprises 365 residues: Probable caffeine synthase 5 (365 aa).

Residue tyrosine 18 coordinates S-adenosyl-L-homocysteine. Threonine 25 contributes to the caffeine binding site. S-adenosyl-L-homocysteine is bound by residues cysteine 61, asparagine 66, aspartate 98, leucine 99, serine 134, and phenylalanine 135. Tyrosine 152, histidine 155, and tryptophan 156 together coordinate caffeine. Residues asparagine 173, aspartate 259, phenylalanine 261, and asparagine 262 each contribute to the Mg(2+) site. A caffeine-binding site is contributed by phenylalanine 317.

The protein belongs to the methyltransferase superfamily. Type-7 methyltransferase family. Mg(2+) serves as cofactor.

Its pathway is alkaloid biosynthesis. In terms of biological role, may be involved in the biosynthesis of caffeine. This chain is Probable caffeine synthase 5, found in Camellia sinensis (Tea plant).